The primary structure comprises 378 residues: Probable dihydroorotase-like protein (378 aa).

This sequence belongs to the metallo-dependent hydrolases superfamily. DHOase family. PyrC' subfamily.

Its function is as follows. Non-functional DHOase. In Helicobacter pylori (strain J99 / ATCC 700824) (Campylobacter pylori J99), this protein is Probable dihydroorotase-like protein (pyrC').